A 346-amino-acid chain; its full sequence is Phosphate acyltransferase (346 aa).

Belongs to the PlsX family. In terms of assembly, homodimer. Probably interacts with PlsY.

It localises to the cytoplasm. The enzyme catalyses a fatty acyl-[ACP] + phosphate = an acyl phosphate + holo-[ACP]. The protein operates within lipid metabolism; phospholipid metabolism. Catalyzes the reversible formation of acyl-phosphate (acyl-PO(4)) from acyl-[acyl-carrier-protein] (acyl-ACP). This enzyme utilizes acyl-ACP as fatty acyl donor, but not acyl-CoA. This Geotalea uraniireducens (strain Rf4) (Geobacter uraniireducens) protein is Phosphate acyltransferase.